The following is a 590-amino-acid chain: Asparagine synthetase [glutamine-hydrolyzing] (590 aa).

Catalysis depends on Cys-2, which acts as the For GATase activity. Positions 2–185 constitute a Glutamine amidotransferase type-2 domain; the sequence is CGILAVLGCS…PGNLYSSRSG (184 aa). L-glutamine-binding positions include 50 to 54, 75 to 77, and Asp-98; these read RLAII and NGE. An Asparagine synthetase domain is found at 193 to 516; sequence PQWYNETIPS…PQNSARFTVP (324 aa). ATP contacts are provided by residues Leu-231, Val-267, and 341-342; that span reads SG.

The enzyme catalyses L-aspartate + L-glutamine + ATP + H2O = L-asparagine + L-glutamate + AMP + diphosphate + H(+). The protein operates within amino-acid biosynthesis; L-asparagine biosynthesis; L-asparagine from L-aspartate (L-Gln route): step 1/1. This chain is Asparagine synthetase [glutamine-hydrolyzing], found in Asparagus officinalis (Garden asparagus).